The following is a 488-amino-acid chain: L-amino oxidase (488 aa).

FAD-binding positions include 60–61 (MS), 80–81 (EA), Arg88, and 104–107 (GPMR). The substrate site is built by Arg107 and Tyr388. The cysteines at positions 347 and 428 are disulfide-linked. FAD is bound by residues Glu474 and 481–486 (GWIDST). 481 to 482 (GW) serves as a coordination point for substrate.

It belongs to the flavin monoamine oxidase family. FIG1 subfamily. As to quaternary structure, monomer. This is in contrast with most of its orthologs, that are non-covalently linked homodimers. FAD is required as a cofactor. Post-translationally, N-glycosylated. As to expression, expressed by the venom gland.

The protein localises to the secreted. The enzyme catalyses an L-alpha-amino acid + O2 + H2O = a 2-oxocarboxylate + H2O2 + NH4(+). It catalyses the reaction L-leucine + O2 + H2O = 4-methyl-2-oxopentanoate + H2O2 + NH4(+). Its function is as follows. Catalyzes an oxidative deamination of predominantly hydrophobic and aromatic L-amino acids, thus producing hydrogen peroxide that may contribute to the diverse toxic effects of this enzyme. Shows activity on L-Leu. Exhibits diverse biological activities, such as hemorrhage, hemolysis, edema, antibacterial and antiparasitic activities, as well as regulation of platelet aggregation. When tested on SW480 and SW620 human colon cancer cells, shows inhibition of cell proliferation, and induction of apoptosis, which is probably a consequence of the increased caspase-3 activity and the decreased Bcl-2 expression. This chain is L-amino oxidase, found in Trimeresurus purpureomaculatus (Mangrove pit viper).